Consider the following 211-residue polypeptide: FMN-dependent NADH:quinone oxidoreductase 3 (211 aa).

Residue 102 to 105 (MWNF) coordinates FMN.

The protein belongs to the azoreductase type 1 family. Homodimer. FMN serves as cofactor.

It catalyses the reaction 2 a quinone + NADH + H(+) = 2 a 1,4-benzosemiquinone + NAD(+). It carries out the reaction N,N-dimethyl-1,4-phenylenediamine + anthranilate + 2 NAD(+) = 2-(4-dimethylaminophenyl)diazenylbenzoate + 2 NADH + 2 H(+). Functionally, quinone reductase that provides resistance to thiol-specific stress caused by electrophilic quinones. Its function is as follows. Also exhibits azoreductase activity. Catalyzes the reductive cleavage of the azo bond in aromatic azo compounds to the corresponding amines. The chain is FMN-dependent NADH:quinone oxidoreductase 3 from Bacillus anthracis.